The following is a 91-amino-acid chain: UPF0358 protein SAB0977 (91 aa).

The protein belongs to the UPF0358 family.

The protein is UPF0358 protein SAB0977 of Staphylococcus aureus (strain bovine RF122 / ET3-1).